Consider the following 112-residue polypeptide: Nucleoid-associated protein CV_1611 (112 aa).

It belongs to the YbaB/EbfC family. In terms of assembly, homodimer.

Its subcellular location is the cytoplasm. The protein localises to the nucleoid. Binds to DNA and alters its conformation. May be involved in regulation of gene expression, nucleoid organization and DNA protection. The chain is Nucleoid-associated protein CV_1611 from Chromobacterium violaceum (strain ATCC 12472 / DSM 30191 / JCM 1249 / CCUG 213 / NBRC 12614 / NCIMB 9131 / NCTC 9757 / MK).